The primary structure comprises 206 residues: MARYTEANCRLCRREGLKLYLKGDRCYTDKCAFSRRGYAPGQHGQSRKKISNYGLQLREKQKAKRIYGVLEKQFRTYYKRADKARGITGENLLVLLEMRLDNVVYRLGYGDSRKESRQLVTHGHFLVNGKKVNIPSFNVSVNDVITVSEKSRATEKFKTFIENPRTLPNWLEGNLENFEGKVVSQPSREDIDVPVNETLIVELYSK.

The region spanning 98–164 (MRLDNVVYRL…EKFKTFIENP (67 aa)) is the S4 RNA-binding domain.

It belongs to the universal ribosomal protein uS4 family. Part of the 30S ribosomal subunit. Contacts protein S5. The interaction surface between S4 and S5 is involved in control of translational fidelity.

One of the primary rRNA binding proteins, it binds directly to 16S rRNA where it nucleates assembly of the body of the 30S subunit. In terms of biological role, with S5 and S12 plays an important role in translational accuracy. In Clostridium tetani (strain Massachusetts / E88), this protein is Small ribosomal subunit protein uS4.